A 207-amino-acid chain; its full sequence is Urease accessory protein UreE (207 aa).

Residues 170-194 (EHHGHSHSHSHDHDHDHDHDHDHQH) show a composition bias toward basic and acidic residues. Positions 170 to 207 (EHHGHSHSHSHDHDHDHDHDHDHQHGPCCSHGHHHGHR) are disordered.

The protein belongs to the UreE family.

It localises to the cytoplasm. In terms of biological role, involved in urease metallocenter assembly. Binds nickel. Probably functions as a nickel donor during metallocenter assembly. This is Urease accessory protein UreE from Burkholderia pseudomallei (strain 1106a).